The chain runs to 165 residues: MSSRRNDYHYDGNDHQYRSPLKSNVDQNSFYESSYRSRQSYHQRTKTPRSSYDSPSSSTNSKEHNSPYHYRVPSNNSTRASFGAASTDTNVELPKINLPDSSLSSKLQSCKSACENSSQSLLNVEQQYAQQVHFWEKIRTDIYREGLRSDAAVKSLNDFVNNVSF.

Over residues 1-17 (MSSRRNDYHYDGNDHQY) the composition is skewed to basic and acidic residues. Positions 1-86 (MSSRRNDYHY…STRASFGAAS (86 aa)) are disordered. Low complexity-rich tracts occupy residues 29 to 38 (SFYESSYRSR) and 50 to 60 (SSYDSPSSSTN). Positions 73-86 (PSNNSTRASFGAAS) are enriched in polar residues.

In terms of assembly, component of the histone H2B ubiquitin ligase complex (HULC) composed of at least brl1, brl2, rhp6 and shf1.

It localises to the nucleus. The protein resides in the cytoplasm. Its subcellular location is the cytoskeleton. The protein localises to the microtubule organizing center. It is found in the spindle pole body. In terms of biological role, component of the histone H2B ubiquitin ligase complex (HULC) which plays a role in transcription regulation by catalyzing the monoubiquitination of histone H2B to form H2BK123ub1. H2BK123ub1 gives a specific tag for epigenetic transcriptional activation and is also a prerequisite for H3K4me and H3K79me formation. This is Small histone ubiquitination factor 1 (shf1) from Schizosaccharomyces pombe (strain 972 / ATCC 24843) (Fission yeast).